Consider the following 103-residue polypeptide: Small ribosomal subunit protein bS18c (103 aa).

Belongs to the bacterial ribosomal protein bS18 family. In terms of assembly, part of the 30S ribosomal subunit.

The protein localises to the plastid. The protein resides in the chloroplast. The sequence is that of Small ribosomal subunit protein bS18c (rps18) from Chlorella vulgaris (Green alga).